The chain runs to 210 residues: MPNTLQDRFFTTCDAALRTLFVTPHAERACPTLPGEATALTDAEKVQSGALMRVNHVGEVCAQALYTAQAFATKNEALRAHFTKASADETNHLAWTQQRLDELGARPSLLNPLWYGAAFGLGLLAGRLGDPISLGFVVETENQVEAHLESHLSLLPANDHASRAIVAQMKDDEVRHALDAQKAGAVPLPPPVKSLMTAAAKVMTTVAHRI.

The Fe cation site is built by Glu59, Glu89, His92, Glu141, Glu173, and His176.

The protein belongs to the COQ7 family. It depends on Fe cation as a cofactor.

It localises to the cell membrane. It catalyses the reaction a 5-methoxy-2-methyl-3-(all-trans-polyprenyl)benzene-1,4-diol + AH2 + O2 = a 3-demethylubiquinol + A + H2O. Its pathway is cofactor biosynthesis; ubiquinone biosynthesis. Its function is as follows. Catalyzes the hydroxylation of 2-nonaprenyl-3-methyl-6-methoxy-1,4-benzoquinol during ubiquinone biosynthesis. This is 3-demethoxyubiquinol 3-hydroxylase from Albidiferax ferrireducens (strain ATCC BAA-621 / DSM 15236 / T118) (Rhodoferax ferrireducens).